The chain runs to 227 residues: Acyl-protein thioesterase 1 (227 aa).

Residues serine 119, aspartate 173, and histidine 207 each act as charge relay system in the active site.

Belongs to the AB hydrolase superfamily. AB hydrolase 2 family.

Its subcellular location is the cytoplasm. It is found in the nucleus. It catalyses the reaction S-hexadecanoyl-L-cysteinyl-[protein] + H2O = L-cysteinyl-[protein] + hexadecanoate + H(+). In terms of biological role, hydrolyzes fatty acids from S-acylated cysteine residues in proteins with a strong preference for palmitoylated G-alpha proteins over other acyl substrates. Mediates the deacylation of G-alpha proteins such as GPA1 in vivo, but has weak or no activity toward palmitoylated Ras proteins. Has weak lysophospholipase activity in vitro; however such activity may not exist in vivo. This is Acyl-protein thioesterase 1 from Yarrowia lipolytica (strain CLIB 122 / E 150) (Yeast).